Here is a 244-residue protein sequence, read N- to C-terminus: Uridylate kinase (244 aa).

15–18 (KLSG) contacts ATP. The interval 23–28 (GSEGFG) is involved in allosteric activation by GTP. Position 57 (glycine 57) interacts with UMP. The ATP site is built by glycine 58 and arginine 62. UMP contacts are provided by residues aspartate 77 and 138 to 145 (TGNPFFTT). ATP contacts are provided by threonine 165, phenylalanine 171, and aspartate 174.

The protein belongs to the UMP kinase family. As to quaternary structure, homohexamer.

It is found in the cytoplasm. It catalyses the reaction UMP + ATP = UDP + ADP. Its pathway is pyrimidine metabolism; CTP biosynthesis via de novo pathway; UDP from UMP (UMPK route): step 1/1. Its activity is regulated as follows. Allosterically activated by GTP. Inhibited by UTP. Its function is as follows. Catalyzes the reversible phosphorylation of UMP to UDP. This is Uridylate kinase from Aeromonas salmonicida (strain A449).